Consider the following 345-residue polypeptide: Phosphate acyltransferase (345 aa).

Belongs to the PlsX family. Homodimer. Probably interacts with PlsY.

It is found in the cytoplasm. It catalyses the reaction a fatty acyl-[ACP] + phosphate = an acyl phosphate + holo-[ACP]. It participates in lipid metabolism; phospholipid metabolism. Functionally, catalyzes the reversible formation of acyl-phosphate (acyl-PO(4)) from acyl-[acyl-carrier-protein] (acyl-ACP). This enzyme utilizes acyl-ACP as fatty acyl donor, but not acyl-CoA. The polypeptide is Phosphate acyltransferase (Anaplasma phagocytophilum (strain HZ)).